A 232-amino-acid polypeptide reads, in one-letter code: Large ribosomal subunit protein uL1 (232 aa).

The protein belongs to the universal ribosomal protein uL1 family. Part of the 50S ribosomal subunit.

Binds directly to 23S rRNA. The L1 stalk is quite mobile in the ribosome, and is involved in E site tRNA release. In terms of biological role, protein L1 is also a translational repressor protein, it controls the translation of the L11 operon by binding to its mRNA. The polypeptide is Large ribosomal subunit protein uL1 (Syntrophus aciditrophicus (strain SB)).